A 67-amino-acid polypeptide reads, in one-letter code: Beta-mammal toxin CeII9 (67 aa).

The 66-residue stretch at 1-66 (KEGYLVNHST…VWPLPKKTCN (66 aa)) folds into the LCN-type CS-alpha/beta domain. 4 disulfide bridges follow: Cys-12–Cys-65, Cys-16–Cys-41, Cys-25–Cys-46, and Cys-29–Cys-48.

This sequence belongs to the long (4 C-C) scorpion toxin superfamily. Sodium channel inhibitor family. Beta subfamily. Expressed by the venom gland.

Its subcellular location is the secreted. Its function is as follows. Beta toxins bind at site-4 of sodium channels and shift the voltage of activation toward more negative potentials thereby affecting sodium channel activation and promoting spontaneous and repetitive firing. This toxin is active against mammals and lethal to mice. Selectively modulates Nav1.4/SCN4A, a sodium channel present in both denervated and innervated skeletal muscle. The polypeptide is Beta-mammal toxin CeII9 (Centruroides elegans (Bark scorpion)).